Consider the following 127-residue polypeptide: Anti-adapter protein IraD (127 aa).

It belongs to the GpW/Gp25 family. IraD subfamily. In terms of assembly, interacts with RssB.

Its subcellular location is the cytoplasm. Its function is as follows. Inhibits RpoS proteolysis by regulating RssB activity, thereby increasing the stability of the sigma stress factor RpoS during oxidative stress. Its effect on RpoS stability is due to its interaction with RssB, which probably blocks the interaction of RssB with RpoS, and the consequent delivery of the RssB-RpoS complex to the ClpXP protein degradation pathway. In Escherichia coli (strain UTI89 / UPEC), this protein is Anti-adapter protein IraD.